The primary structure comprises 212 residues: ATP phosphoribosyltransferase (212 aa).

It belongs to the ATP phosphoribosyltransferase family. Short subfamily. As to quaternary structure, heteromultimer composed of HisG and HisZ subunits.

It localises to the cytoplasm. The enzyme catalyses 1-(5-phospho-beta-D-ribosyl)-ATP + diphosphate = 5-phospho-alpha-D-ribose 1-diphosphate + ATP. Its pathway is amino-acid biosynthesis; L-histidine biosynthesis; L-histidine from 5-phospho-alpha-D-ribose 1-diphosphate: step 1/9. Its function is as follows. Catalyzes the condensation of ATP and 5-phosphoribose 1-diphosphate to form N'-(5'-phosphoribosyl)-ATP (PR-ATP). Has a crucial role in the pathway because the rate of histidine biosynthesis seems to be controlled primarily by regulation of HisG enzymatic activity. This chain is ATP phosphoribosyltransferase, found in Geobacter metallireducens (strain ATCC 53774 / DSM 7210 / GS-15).